The primary structure comprises 101 residues: Urease subunit beta (101 aa).

Belongs to the urease beta subunit family. In terms of assembly, heterotrimer of UreA (gamma), UreB (beta) and UreC (alpha) subunits. Three heterotrimers associate to form the active enzyme.

The protein localises to the cytoplasm. It catalyses the reaction urea + 2 H2O + H(+) = hydrogencarbonate + 2 NH4(+). It participates in nitrogen metabolism; urea degradation; CO(2) and NH(3) from urea (urease route): step 1/1. The protein is Urease subunit beta of Pseudomonas paraeruginosa (strain DSM 24068 / PA7) (Pseudomonas aeruginosa (strain PA7)).